A 631-amino-acid chain; its full sequence is MSTTTLTRREQRAKAQHFIDTLEGTAFPNSKRIYVTGSQHDIRVPMREIQLSPTLIGGSKDNPQFEENEAVPVYDTSGPYGDPEVAINVQQGLAKLRQPWIDARNDSEELDDRSSAYTRERLADDGLDDLRFTGLLTPKRAKAGKRVTQLHYARQGIVTPEMEFIAIRENMGRERIRSEVLRHQHPGMNFGARLPENITPEFVRDEVAAGRAIIPANINHPESEPMIIGRNFLVKVNANIGNSAVTSSIEEEVEKLVWSTRWGADTVMDLSTGRYIHETREWILRNSPVPIGTVPIYQALEKVNGIAEDLTWEAFRDTLLEQAEQGVDYFTIHAGVLLRYVPMTAKRLTGIVSRGGSIMAKWCLSHHKENFLFEHFREICEICSAYDVSLSLGDGLRPGSIQDANDEAQFSELHTLGELTNIAWEYDVQVMIEGPGHVPMHMIQRNMTEELESCHEAPFYTLGPLTTDIAPGYDHFTSGIGAAMIGWFGCAMLCYVTPKEHLGLPNKEDVKQGLITYKIAAHAADLAKGHPGAQIRDNAMSKARFEFRWEDQFNLALDPFTARAYHDETLPQESGKVAHFCSMCGPKFCSMKISQEVRDYAAAQAIEVGMADMSENFRAKGGEIYLKREEA.

Residues asparagine 239, methionine 268, tyrosine 297, histidine 333, 353–355 (SRG), 394–397 (DGLR), and glutamate 433 contribute to the substrate site. Histidine 437 is a binding site for Zn(2+). Tyrosine 460 provides a ligand contact to substrate. A Zn(2+)-binding site is contributed by histidine 501. [4Fe-4S] cluster contacts are provided by cysteine 581, cysteine 584, and cysteine 589.

The protein belongs to the ThiC family. Homodimer. [4Fe-4S] cluster serves as cofactor.

It catalyses the reaction 5-amino-1-(5-phospho-beta-D-ribosyl)imidazole + S-adenosyl-L-methionine = 4-amino-2-methyl-5-(phosphooxymethyl)pyrimidine + CO + 5'-deoxyadenosine + formate + L-methionine + 3 H(+). It functions in the pathway cofactor biosynthesis; thiamine diphosphate biosynthesis. In terms of biological role, catalyzes the synthesis of the hydroxymethylpyrimidine phosphate (HMP-P) moiety of thiamine from aminoimidazole ribotide (AIR) in a radical S-adenosyl-L-methionine (SAM)-dependent reaction. This Salmonella typhi protein is Phosphomethylpyrimidine synthase.